The sequence spans 204 residues: CDP-archaeol synthase (204 aa).

The next 6 helical transmembrane spans lie at 5–25 (VYAC…YVIL), 43–63 (MLWV…SRLV), 91–111 (FEGF…LAYA), 116–136 (GVSA…GAFV), 147–167 (PAIL…QGLF), and 175–195 (VVVA…MAAF).

The protein belongs to the CDP-archaeol synthase family. The cofactor is Mg(2+).

Its subcellular location is the cell membrane. It catalyses the reaction 2,3-bis-O-(geranylgeranyl)-sn-glycerol 1-phosphate + CTP + H(+) = CDP-2,3-bis-O-(geranylgeranyl)-sn-glycerol + diphosphate. It functions in the pathway membrane lipid metabolism; glycerophospholipid metabolism. Catalyzes the formation of CDP-2,3-bis-(O-geranylgeranyl)-sn-glycerol (CDP-archaeol) from 2,3-bis-(O-geranylgeranyl)-sn-glycerol 1-phosphate (DGGGP) and CTP. This reaction is the third ether-bond-formation step in the biosynthesis of archaeal membrane lipids. The sequence is that of CDP-archaeol synthase from Thermofilum pendens (strain DSM 2475 / Hrk 5).